A 612-amino-acid polypeptide reads, in one-letter code: 1-deoxy-D-xylulose-5-phosphate synthase (612 aa).

Thiamine diphosphate contacts are provided by residues His77 and 118–120; that span reads GHS. Asp147 contributes to the Mg(2+) binding site. Residues 148-149, Asn176, Tyr288, and Glu365 each bind thiamine diphosphate; that span reads AA. Asn176 contributes to the Mg(2+) binding site.

It belongs to the transketolase family. DXPS subfamily. In terms of assembly, homodimer. It depends on Mg(2+) as a cofactor. Requires thiamine diphosphate as cofactor.

The catalysed reaction is D-glyceraldehyde 3-phosphate + pyruvate + H(+) = 1-deoxy-D-xylulose 5-phosphate + CO2. The protein operates within metabolic intermediate biosynthesis; 1-deoxy-D-xylulose 5-phosphate biosynthesis; 1-deoxy-D-xylulose 5-phosphate from D-glyceraldehyde 3-phosphate and pyruvate: step 1/1. Catalyzes the acyloin condensation reaction between C atoms 2 and 3 of pyruvate and glyceraldehyde 3-phosphate to yield 1-deoxy-D-xylulose-5-phosphate (DXP). The chain is 1-deoxy-D-xylulose-5-phosphate synthase from Malacoplasma penetrans (strain HF-2) (Mycoplasma penetrans).